We begin with the raw amino-acid sequence, 130 residues long: Small ribosomal subunit protein uS9 (130 aa).

This sequence belongs to the universal ribosomal protein uS9 family.

The protein is Small ribosomal subunit protein uS9 of Neisseria gonorrhoeae (strain ATCC 700825 / FA 1090).